The chain runs to 173 residues: Alpha-crystallin A chain (173 aa).

Residue methionine 1 is modified to N-acetylmethionine. The segment at 1-63 is required for complex formation with BFSP1 and BFSP2; it reads MDIAIQHPWF…RSVLDSGVSE (63 aa). Glutamine 6 is subject to Deamidated glutamine; partial. At serine 45 the chain carries Phosphoserine. Glutamine 50 carries the deamidated glutamine; partial modification. Positions 52–162 constitute a sHSP domain; sequence LFRSVLDSGV…GHSERAIPVS (111 aa). At lysine 70 the chain carries N6-acetyllysine. A Deamidated glutamine; partial modification is found at glutamine 90. Lysine 99 is subject to N6-acetyllysine. Residue histidine 100 coordinates Zn(2+). Asparagine 101 is modified (deamidated asparagine; partial). Zn(2+) contacts are provided by glutamate 102 and histidine 107. Serine 122 carries the post-translational modification Phosphoserine. Asparagine 123 is subject to Deamidated asparagine; partial. The interval 144 to 173 is disordered; that stretch reads PKIPSGMDAGHSERAIPVSREEKPSSAPSS. The segment covering 153-167 has biased composition (basic and acidic residues); that stretch reads GHSERAIPVSREEKP. Histidine 154 is a binding site for Zn(2+). An O-linked (GlcNAc) serine glycan is attached at serine 162.

It belongs to the small heat shock protein (HSP20) family. In terms of assembly, heteromer composed of three CRYAA and one CRYAB subunits. Inter-subunit bridging via zinc ions enhances stability, which is crucial as there is no protein turn over in the lens. Can also form homodimers and homotetramers (dimers of dimers) which serve as the building blocks of homooligomers. Within homooligomers, the zinc-binding motif is created from residues of 3 different molecules. His-100 and Glu-102 from one molecule are ligands of the zinc ion, and His-107 and His-154 residues from additional molecules complete the site with tetrahedral coordination geometry. Part of a complex required for lens intermediate filament formation composed of BFSP1, BFSP2 and CRYAA. Post-translationally, acetylation at Lys-70 may increase chaperone activity. In terms of processing, undergoes age-dependent proteolytical cleavage at the C-terminus.

Its subcellular location is the cytoplasm. The protein resides in the nucleus. Its function is as follows. Contributes to the transparency and refractive index of the lens. Acts as a chaperone, preventing aggregation of various proteins under a wide range of stress conditions. Required for the correct formation of lens intermediate filaments as part of a complex composed of BFSP1, BFSP2 and CRYAA. This is Alpha-crystallin A chain (CRYAA) from Ceratotherium simum (White rhinoceros).